A 207-amino-acid polypeptide reads, in one-letter code: Cytochrome c oxidase subunit 3 (207 aa).

5 consecutive transmembrane segments (helical) span residues 30–50 (FWLF…TFLA), 67–87 (VTLV…SVYA), 101–121 (LWLG…IYEF), 144–164 (LVGT…TLMI), and 186–206 (WHFI…MGMV).

The protein belongs to the cytochrome c oxidase subunit 3 family.

Its subcellular location is the cell membrane. The catalysed reaction is 4 Fe(II)-[cytochrome c] + O2 + 8 H(+)(in) = 4 Fe(III)-[cytochrome c] + 2 H2O + 4 H(+)(out). In Bacillus subtilis (strain 168), this protein is Cytochrome c oxidase subunit 3 (ctaE).